The following is a 292-amino-acid chain: tRNA pseudouridine synthase B (292 aa).

Asp38 functions as the Nucleophile in the catalytic mechanism.

The protein belongs to the pseudouridine synthase TruB family. Type 1 subfamily.

The enzyme catalyses uridine(55) in tRNA = pseudouridine(55) in tRNA. Functionally, responsible for synthesis of pseudouridine from uracil-55 in the psi GC loop of transfer RNAs. The sequence is that of tRNA pseudouridine synthase B from Streptococcus pneumoniae serotype 4 (strain ATCC BAA-334 / TIGR4).